We begin with the raw amino-acid sequence, 189 residues long: MRVPKKERQRLLQETIEHNPFIKDEELSKQFSVSIQTIRLDRMELKIPEVRERIKHVASEHLDEVKSLSMSEVIGDMIDLKLDDSAISVLDIEKEHVFSRNEIARGHVLFAQANSLAVALINDELALTTKADIRFSRQVHLGERVVAKARVMKLRGDGRTDVTVESYVGEECVFDGDFTIYRRGEEEQA.

This sequence belongs to the FapR family.

Functionally, transcriptional factor involved in regulation of membrane lipid biosynthesis by repressing genes involved in fatty acid and phospholipid metabolism. The protein is Transcription factor FapR of Exiguobacterium sp. (strain ATCC BAA-1283 / AT1b).